Reading from the N-terminus, the 351-residue chain is Ferrochelatase (351 aa).

Fe cation-binding residues include histidine 221 and glutamate 302.

Belongs to the ferrochelatase family.

It localises to the cytoplasm. It catalyses the reaction heme b + 2 H(+) = protoporphyrin IX + Fe(2+). It participates in porphyrin-containing compound metabolism; protoheme biosynthesis; protoheme from protoporphyrin-IX: step 1/1. Its function is as follows. Catalyzes the ferrous insertion into protoporphyrin IX. The protein is Ferrochelatase of Bradyrhizobium sp. (strain BTAi1 / ATCC BAA-1182).